Consider the following 181-residue polypeptide: ATP-dependent protease subunit HslV (181 aa).

Thr11 is a catalytic residue. Na(+) contacts are provided by Ala166, Cys169, and Thr172.

Belongs to the peptidase T1B family. HslV subfamily. A double ring-shaped homohexamer of HslV is capped on each side by a ring-shaped HslU homohexamer. The assembly of the HslU/HslV complex is dependent on binding of ATP.

Its subcellular location is the cytoplasm. The catalysed reaction is ATP-dependent cleavage of peptide bonds with broad specificity.. With respect to regulation, allosterically activated by HslU binding. Protease subunit of a proteasome-like degradation complex believed to be a general protein degrading machinery. The polypeptide is ATP-dependent protease subunit HslV (Chlorobaculum tepidum (strain ATCC 49652 / DSM 12025 / NBRC 103806 / TLS) (Chlorobium tepidum)).